Reading from the N-terminus, the 246-residue chain is Carboxymethylenebutenolidase homolog (246 aa).

Catalysis depends on residues C132, D179, and H212.

It belongs to the dienelactone hydrolase family.

The protein resides in the cytoplasm. Its subcellular location is the cytosol. In terms of biological role, cysteine hydrolase. This chain is Carboxymethylenebutenolidase homolog (cmbl), found in Xenopus tropicalis (Western clawed frog).